The chain runs to 307 residues: Aspartate carbamoyltransferase catalytic subunit (307 aa).

Residues arginine 54 and threonine 55 each contribute to the carbamoyl phosphate site. Lysine 83 is a binding site for L-aspartate. Arginine 104, histidine 132, and glutamine 135 together coordinate carbamoyl phosphate. 2 residues coordinate L-aspartate: arginine 165 and arginine 228. The carbamoyl phosphate site is built by leucine 267 and proline 268.

It belongs to the aspartate/ornithine carbamoyltransferase superfamily. ATCase family. As to quaternary structure, heterododecamer (2C3:3R2) of six catalytic PyrB chains organized as two trimers (C3), and six regulatory PyrI chains organized as three dimers (R2).

It carries out the reaction carbamoyl phosphate + L-aspartate = N-carbamoyl-L-aspartate + phosphate + H(+). The protein operates within pyrimidine metabolism; UMP biosynthesis via de novo pathway; (S)-dihydroorotate from bicarbonate: step 2/3. Its function is as follows. Catalyzes the condensation of carbamoyl phosphate and aspartate to form carbamoyl aspartate and inorganic phosphate, the committed step in the de novo pyrimidine nucleotide biosynthesis pathway. This Clostridium perfringens (strain ATCC 13124 / DSM 756 / JCM 1290 / NCIMB 6125 / NCTC 8237 / Type A) protein is Aspartate carbamoyltransferase catalytic subunit.